The following is a 314-amino-acid chain: DNA topoisomerase 1B (314 aa).

In terms of domain architecture, Topo IB-type catalytic spans Val77–Gly314. Residue Tyr274 is the O-(3'-phospho-DNA)-tyrosine intermediate of the active site.

It belongs to the type IB topoisomerase family.

The enzyme catalyses ATP-independent breakage of single-stranded DNA, followed by passage and rejoining.. Its function is as follows. Releases the supercoiling and torsional tension of DNA introduced during the DNA replication and transcription by transiently cleaving and rejoining one strand of the DNA duplex. Introduces a single-strand break via transesterification at the specific target site 5'-[CT]CCTTp site in duplex DNA. The scissile phosphodiester is attacked by the catalytic tyrosine of the enzyme, resulting in the formation of a DNA-(3'-phosphotyrosyl)-enzyme intermediate and the expulsion of a 5'-OH DNA strand. The free DNA strand then undergoes passage around the unbroken strand thus removing DNA supercoils. Finally, in the religation step, the DNA 5'-OH attacks the covalent intermediate to expel the active-site tyrosine and restore the DNA phosphodiester backbone. This chain is DNA topoisomerase 1B (TOP1), found in Vaccinia virus (strain Ankara) (VACV).